The primary structure comprises 281 residues: Sorbose reductase SOU1 (281 aa).

NADP(+)-binding residues include I47, K74, and N119. Residues S173 and Y188 each act as proton donor in the active site. NADP(+) contacts are provided by Y188, K192, I221, and T223. K192 acts as the Lowers pKa of active site Tyr in catalysis.

It belongs to the short-chain dehydrogenases/reductases (SDR) family. In terms of assembly, homotetramer.

It catalyses the reaction D-sorbitol + NADP(+) = keto-L-sorbose + NADPH + H(+). Its pathway is carbohydrate degradation; L-sorbose degradation. Its function is as follows. Catalyzes the NADP dependent reduction of L-sorbose to D-glucitol. Can also convert fructose to mannitol, but less efficiently. This chain is Sorbose reductase SOU1 (SOU1), found in Candida albicans (strain SC5314 / ATCC MYA-2876) (Yeast).